A 518-amino-acid chain; its full sequence is Bifunctional purine biosynthesis protein PurH (518 aa).

One can recognise an MGS-like domain in the interval 1 to 146 (MSPIALLSVS…KNHQDVLVVT (146 aa)).

This sequence belongs to the PurH family.

It catalyses the reaction (6R)-10-formyltetrahydrofolate + 5-amino-1-(5-phospho-beta-D-ribosyl)imidazole-4-carboxamide = 5-formamido-1-(5-phospho-D-ribosyl)imidazole-4-carboxamide + (6S)-5,6,7,8-tetrahydrofolate. It carries out the reaction IMP + H2O = 5-formamido-1-(5-phospho-D-ribosyl)imidazole-4-carboxamide. It functions in the pathway purine metabolism; IMP biosynthesis via de novo pathway; 5-formamido-1-(5-phospho-D-ribosyl)imidazole-4-carboxamide from 5-amino-1-(5-phospho-D-ribosyl)imidazole-4-carboxamide (10-formyl THF route): step 1/1. Its pathway is purine metabolism; IMP biosynthesis via de novo pathway; IMP from 5-formamido-1-(5-phospho-D-ribosyl)imidazole-4-carboxamide: step 1/1. This Prochlorococcus marinus (strain NATL2A) protein is Bifunctional purine biosynthesis protein PurH.